A 1318-amino-acid polypeptide reads, in one-letter code: Major tegument protein (1318 aa).

The protein belongs to the herpesviridae MTP family. Interacts with host DAXX; this interaction disrupts the chromatin remodeling complex ATRX:DAXX and thus allows viral transcription. Interacts with host SMC6; this interaction targets SMC5-SMC6 complex for proteasomal degradation.

The protein localises to the virion tegument. Its subcellular location is the host nucleus. In terms of biological role, tegument protein that plays a role in the inhibition of host intrinsic defenses to promote viral early gene activation. Interacts with host DAXX and thereby disrupts the complex between DAXX and ATRX. Suppresses the DAXX-ATRX dependent deposition of histone H3.3 on viral chromatin allowing viral transcription. Targets also host SMC5/6 for proteasomal degradation in a CUL7 and calpain-dependent manner to support nuclear membrane-less replication compartment formation and lytic virus replication. The protein is Major tegument protein of Homo sapiens (Human).